Consider the following 309-residue polypeptide: Partitioning defective protein 6 (309 aa).

The PB1 domain occupies 14–96 (TLQVKSKFDS…PLLRLLIQRR (83 aa)). The Pseudo-CRIB domain occupies 132–149 (ISNPEDFRQVSAIIDVDI). The region spanning 156–249 (RVRLCKHGQE…NLIITVKPAN (94 aa)) is the PDZ domain. Residues 249-270 (NQRNTLSRGPSQQGTPNASEMS) are compositionally biased toward polar residues. Residues 249 to 309 (NQRNTLSRGP…DANDSDSGED (61 aa)) form a disordered region.

The protein belongs to the PAR6 family. In terms of assembly, interacts with par-3, required for its peripheral localization, and with cdc-42, required for the activation of a par-3/par-6/pkc-3 complex. In terms of tissue distribution, colocalized with par-3 at all stages in early embryos, at the anterior cortex of the embryo. Patchy expression observed at the periphery after completion of meiosis I and in meiosis II, which on completion of metaphase II, is restricted to the anterior 85% of embryo length; this decreases to 55% in embryos between prophase and telophase of the first mitosis. During the first cleavage, expression is detected in the advancing furrow. Along with pkc-3, is unable to associate with the apical cortex of cells that lack par-3. Transiently coexpressed and colocalized with par-3 and pkc-3, asymmetrically in the developing somatic gonad, including the spermathecal precursor cells of L4 larvae.

Its subcellular location is the cytoplasm. It localises to the cell membrane. The protein resides in the cell junction. It is found in the tight junction. In terms of biological role, necessary for apicobasal and anterior-posterior asymmetries associated with cell adhesion and gastrulation during the first few cell cycles of embryogenesis. Required for localizing/ maintaining par-3 at the cell periphery. Regulates mes-1 expression and/or localization pattern during early embryogenesis. Acts together with par-3 and pkc-3 in maintaining epithelial cell polarity in the distal spermatheca. Plays a role in endosome and Golgi body positioning. The sequence is that of Partitioning defective protein 6 from Caenorhabditis elegans.